The chain runs to 722 residues: MEGSRPRAPSGHLAPSPPAFDGELDLQRYSNGPAVSAGSLGMGAVSWSESRAGERRFPCPVCGKRFRFNSILALHLRAHPGAQAFQCPHCGHRAAQRALLRSHLRTHQPERPRSPAARLLLELEERALLREARLGRARSSGGMQATPATEGLARPQAPSSSAFRCPYCKGKFRTSAERERHLHILHRPWKCGLCSFGSSQEEELLHHSLTAHGAPERPLAATSAAPPPQPQPQPPPQPEPRSVPQPEPEPEPEREATPTPAPAAPEEPPAPPEFRCQVCGQSFTQSWFLKGHMRKHKASFDHACPVCGRCFKEPWFLKNHMKVHASKLGPLRAPGPASGPARAPQPPDLGLLAYEPLGPALLLAPAPTPAERREPPSLLGYLSLRAGEGRPNGEGAEPGPGRSFGGFRPLSSALPARARRHRAEEPEEEEEVVEAEEETWARGRSLGSLASLHPRPGEGPGHSASAAGAQARSTATQEENGLLVGGTRPEGGRGATGKDCPFCGKSFRSAHHLKVHLRVHTGERPYKCPHCDYAGTQSGSLKYHLQRHHREQRSGAGPGPPPEPPPPSQRGSAPQSGAKPSPQPATWVEGASSPRPPSSGAGPGSRRKPASPGRTLRNGRGGEAEPLDLSLRAGPGGEAGPGGALHRCLFCPFATGAPELMALHLQVHHSRRARGRRPPQADASPPYARVPSGETPPSPSQEGEEGSGLSRPGEAGLGGQER.

The segment at 1 to 21 (MEGSRPRAPSGHLAPSPPAFD) is disordered. Ser-16 is modified (phosphoserine). 2 C2H2-type zinc fingers span residues 57–79 (FPCP…LRAH) and 85–107 (FQCP…LRTH). Positions 137–160 (ARSSGGMQATPATEGLARPQAPSS) are disordered. 2 C2H2-type zinc fingers span residues 163-186 (FRCP…HILH) and 189-212 (WKCG…LTAH). Residues 215–275 (PERPLAATSA…EEPPAPPEFR (61 aa)) form a disordered region. Composition is skewed to pro residues over residues 225–247 (APPP…PQPE) and 259–272 (TPAP…PAPP). 2 C2H2-type zinc fingers span residues 274–296 (FRCQ…MRKH) and 302–324 (HACP…MKVH). The tract at residues 384-495 (LRAGEGRPNG…GTRPEGGRGA (112 aa)) is disordered. Positions 390–404 (RPNGEGAEPGPGRSF) are enriched in gly residues. The span at 425 to 438 (EPEEEEEVVEAEEE) shows a compositional bias: acidic residues. Positions 463-477 (SASAAGAQARSTATQ) are enriched in low complexity. C2H2-type zinc fingers lie at residues 498–520 (KDCP…LRVH) and 526–548 (YKCP…LQRH). Disordered regions lie at residues 542–648 (KYHL…LHRC) and 668–722 (HHSR…GQER). Pro residues predominate over residues 558–568 (PGPPPEPPPPS). A compositionally biased stretch (gly residues) spans 634–643 (GPGGEAGPGG). The C2H2-type 9 zinc-finger motif lies at 646-668 (HRCLFCPFATGAPELMALHLQVH). Basic residues predominate over residues 668–677 (HHSRRARGRR). Ser-692 carries the post-translational modification Phosphoserine. A Phosphothreonine modification is found at Thr-695. A Phosphoserine modification is found at Ser-698.

It belongs to the krueppel C2H2-type zinc-finger protein family. Interacts with SOX9 (via C-terminus). As to expression, ubiquitous.

It localises to the nucleus. Transcriptional regulator. Recognizes and binds 2 copies of the core DNA sequence motif 5'-GGGGG-3'. Binds to the HMGN1 promoter and may repress HMGN1 expression. Regulates SNCA expression in primary cortical neurons. Binds to the COL2A1 promoter and activates COL2A1 expression, as part of a complex with SOX9. Plays a role in chondrocyte differentiation. The chain is Zinc finger protein 219 (ZNF219) from Homo sapiens (Human).